Consider the following 317-residue polypeptide: Adenosine receptor A3 (317 aa).

Residues 1–14 (MPVNSTAVSLASVT) lie on the Extracellular side of the membrane. Asparagine 4 is a glycosylation site (N-linked (GlcNAc...) asparagine). The helical transmembrane segment at 15–37 (YISVEILIGLCAIVGNVLVIWVV) threads the bilayer. Residues 38–48 (KLNPSLQTTTF) are Cytoplasmic-facing. The chain crosses the membrane as a helical span at residues 49 to 72 (YFIVSLALADIAVGVLVMPLAIVI). The Extracellular segment spans residues 73–84 (SLGVTIHFYSCL). Cysteines 83 and 165 form a disulfide. A helical membrane pass occupies residues 85–106 (LMTCLLMIFTHASIMSLLAIAV). Residues 107–126 (DRYLRVKLTVRYRRVTTQRR) lie on the Cytoplasmic side of the membrane. Residues 127-148 (IWLALGLCWLVSFLVGLTPMFG) traverse the membrane as a helical segment. Residues 149 to 176 (WNMKLSSADKNLTFLPCQFRSVMRMDYM) lie on the Extracellular side of the membrane. A helical transmembrane segment spans residues 177 to 197 (VYFSFFTWILIPLVVMCAIYF). The Cytoplasmic portion of the chain corresponds to 198-230 (DIFYVIRNRLSQNFSGSKETGAFYGREFKTAKS). The helical transmembrane segment at 231–254 (LSLVLFLFALSWLPLSIINCIIYF) threads the bilayer. Residues 255-260 (NGEVPQ) are Extracellular-facing. A helical transmembrane segment spans residues 261–283 (IVLYLGILLSHANSMMNPIVYAY). The Cytoplasmic portion of the chain corresponds to 284–317 (KIKKFKETYLLILKACVICQPSKSMDPSIEQTSE). Cysteine 302 is lipidated: S-palmitoyl cysteine.

The protein belongs to the G-protein coupled receptor 1 family. Post-translationally, phosphorylation on Thr-315 and Ser-316 may be crucial for rapid desensitization. Phosphorylation on Thr-315 may be necessary for phosphorylation on Ser-316 to occur.

It localises to the cell membrane. Receptor for adenosine. The activity of this receptor is mediated by G proteins which inhibits adenylyl cyclase. The protein is Adenosine receptor A3 (ADORA3) of Bos taurus (Bovine).